Here is a 340-residue protein sequence, read N- to C-terminus: Glutaminyl-peptide cyclotransferase (340 aa).

The signal sequence occupies residues 1–23 (MAIGSVVFAAAGLLLLLLPPSHQ). An N-linked (GlcNAc...) asparagine glycan is attached at Asn42. Positions 85 and 91 each coordinate alpha-D-mannopyranose. A disulfide bridge connects residues Cys113 and Cys136. Asp131 provides a ligand contact to Zn(2+). Alpha-D-mannopyranose-binding residues include Gln151 and Arg155. N-linked (GlcNAc...) asparagine glycosylation is present at Asn156. Residue Glu170 is the Proton acceptor of the active site. Glu171 contributes to the Zn(2+) binding site. Asp218 serves as the catalytic Proton acceptor. His297 serves as a coordination point for Zn(2+). Position 306 (Leu306) interacts with alpha-D-mannopyranose.

The protein belongs to the glutaminyl-peptide cyclotransferase family.

Its subcellular location is the secreted. The catalysed reaction is N-terminal L-glutaminyl-[peptide] = N-terminal 5-oxo-L-prolyl-[peptide] + NH4(+). Inhibited by imidazoles (imidazole, benzimidazole, 1-benzylimidazole, 1-methylimidazole, P150/03, N-omega-acetylhistamine and 4-methylimidazole) and cysteamines (cysteamine, N-dimethylcysteamine and N-diethylcysteamine). Partially inhibited by PDB50 1(3,4-dimethoxyphenyl)-3-(3-imidazol-1-ylpropyl)thiourea. Acts as a glutaminyl-peptide cyclotransferase. Responsible for the biosynthesis of pyroglutamyl peptides. Might be more efficient in the conversion of tri and tetrapeptides in vitro. Might have a relative preference for substrates containing hydrophobic amino acids in vitro. This chain is Glutaminyl-peptide cyclotransferase, found in Drosophila melanogaster (Fruit fly).